Reading from the N-terminus, the 105-residue chain is Met repressor (105 aa).

It belongs to the MetJ family. Homodimer.

Its subcellular location is the cytoplasm. Functionally, this regulatory protein, when combined with SAM (S-adenosylmethionine) represses the expression of the methionine regulon and of enzymes involved in SAM synthesis. This chain is Met repressor, found in Pasteurella multocida (strain Pm70).